The sequence spans 96 residues: Large ribosomal subunit protein eL21 (96 aa).

A disordered region spans residues 1–22; it reads MRKSKGFKSRSRYKLKRSIRPK.

It belongs to the eukaryotic ribosomal protein eL21 family.

The polypeptide is Large ribosomal subunit protein eL21 (Methanosphaera stadtmanae (strain ATCC 43021 / DSM 3091 / JCM 11832 / MCB-3)).